A 301-amino-acid chain; its full sequence is Chitosanase (301 aa).

Positions 1–42 (MHMSNARPSKSRTKFLLAFLCFTLMASLFGATALFGPSKAAA) are cleaved as a signal peptide. Glutamate 79 acts as the Proton donor in catalysis. A disulfide bridge links cysteine 92 with cysteine 166. Aspartate 97 functions as the Nucleophile in the catalytic mechanism.

It belongs to the glycosyl hydrolase 46 family.

It is found in the secreted. It carries out the reaction Endohydrolysis of beta-(1-&gt;4)-linkages between D-glucosamine residues in a partly acetylated chitosan.. Its function is as follows. Aids in the defense against invading fungal pathogens by degrading their cell wall chitosan. This Niallia circulans (Bacillus circulans) protein is Chitosanase (csn).